Reading from the N-terminus, the 113-residue chain is Cell division topological specificity factor (113 aa).

The protein belongs to the MinE family.

Prevents the cell division inhibition by proteins MinC and MinD at internal division sites while permitting inhibition at polar sites. This ensures cell division at the proper site by restricting the formation of a division septum at the midpoint of the long axis of the cell. The protein is Cell division topological specificity factor of Methylobacterium radiotolerans (strain ATCC 27329 / DSM 1819 / JCM 2831 / NBRC 15690 / NCIMB 10815 / 0-1).